Here is a 106-residue protein sequence, read N- to C-terminus: Urease subunit beta (106 aa).

Belongs to the urease beta subunit family. In terms of assembly, heterotrimer of UreA (gamma), UreB (beta) and UreC (alpha) subunits. Three heterotrimers associate to form the active enzyme.

It is found in the cytoplasm. The enzyme catalyses urea + 2 H2O + H(+) = hydrogencarbonate + 2 NH4(+). It participates in nitrogen metabolism; urea degradation; CO(2) and NH(3) from urea (urease route): step 1/1. In Klebsiella pneumoniae (strain 342), this protein is Urease subunit beta.